Reading from the N-terminus, the 256-residue chain is Chorismate mutase (256 aa).

Positions 3-255 (FTKPETVLNL…EVEYLLRRLE (253 aa)) constitute a Chorismate mutase domain. Positions 75 and 76 each coordinate L-tyrosine. Residues asparagine 138, asparagine 139, glycine 141, and serine 142 each contribute to the L-tryptophan site. L-tyrosine is bound by residues asparagine 139, glycine 141, serine 142, and threonine 145.

As to quaternary structure, homodimer.

The protein localises to the cytoplasm. It carries out the reaction chorismate = prephenate. Its pathway is metabolic intermediate biosynthesis; prephenate biosynthesis; prephenate from chorismate: step 1/1. With respect to regulation, each dimer has two allosteric binding sites that can bind the regulatory effectors tryptophan or tyrosine. Can bind either one tryptophan or one tyrosine, two tryptophan or two tyrosine or one tryptophan and one tyrosine, which differentially affect the catalytic activity. Activated by tryptophan and subject to feedback inhibition by tyrosine. In the presence of both tryptophan and tyrosine, the enzyme is in the activated state. Its function is as follows. Catalyzes the Claisen rearrangement of chorismate to prephenate. Acts at the first branch point in the aromatic amino acid pathway where it steers biosynthesis towards phenylalanine and tyrosine, and away from tryptophan. This Saccharomyces cerevisiae (strain ATCC 204508 / S288c) (Baker's yeast) protein is Chorismate mutase.